Reading from the N-terminus, the 333-residue chain is Anthranilate phosphoribosyltransferase (333 aa).

5-phospho-alpha-D-ribose 1-diphosphate is bound by residues glycine 80, 83 to 84 (GD), serine 88, 90 to 93 (NIST), 108 to 116 (KHGNRSVSS), and serine 120. Glycine 80 contacts anthranilate. A Mg(2+)-binding site is contributed by serine 92. Residue asparagine 111 coordinates anthranilate. Arginine 166 serves as a coordination point for anthranilate. Residues aspartate 224 and glutamate 225 each contribute to the Mg(2+) site.

This sequence belongs to the anthranilate phosphoribosyltransferase family. In terms of assembly, homodimer. Mg(2+) is required as a cofactor.

It carries out the reaction N-(5-phospho-beta-D-ribosyl)anthranilate + diphosphate = 5-phospho-alpha-D-ribose 1-diphosphate + anthranilate. It participates in amino-acid biosynthesis; L-tryptophan biosynthesis; L-tryptophan from chorismate: step 2/5. Functionally, catalyzes the transfer of the phosphoribosyl group of 5-phosphorylribose-1-pyrophosphate (PRPP) to anthranilate to yield N-(5'-phosphoribosyl)-anthranilate (PRA). This chain is Anthranilate phosphoribosyltransferase, found in Yersinia pseudotuberculosis serotype O:1b (strain IP 31758).